A 305-amino-acid chain; its full sequence is MSHFDRVRDYLTALQDRICNVVETIDGQSHFHQDHWQRTEGGGGRTRLLRDGAVFEQAAIGFSDVCGTHLPPSASVRRPELAGANWRACGVSLVFHPKNPFVPTTHLNVRYFRAEREGKQVAAWFGGGFDLTPFYPFDEDVVHWHTVARDLCAPFGDERYAAHKRWCDEYFVLRHRNETRGVGGLFFDDLDKDFERDFDYQRAVGDGFLDAYFPIVTRRHDTPYGDRERAFQLYRRGRYVEFNLLFDRGTLFGLQSGGRAESILISLPPLVRWEYGYHPLPGSAEARLADYLLPRDWLEESRICE.

S92 lines the substrate pocket. The a divalent metal cation site is built by H96 and H106. The active-site Proton donor is H106. Substrate is bound at residue 108–110 (NVR). Positions 145 and 175 each coordinate a divalent metal cation. Residues 239-274 (YVEFNLLFDRGTLFGLQSGGRAESILISLPPLVRWE) form an important for dimerization region. 257 to 259 (GGR) serves as a coordination point for substrate.

This sequence belongs to the aerobic coproporphyrinogen-III oxidase family. In terms of assembly, homodimer. A divalent metal cation serves as cofactor.

It is found in the cytoplasm. The catalysed reaction is coproporphyrinogen III + O2 + 2 H(+) = protoporphyrinogen IX + 2 CO2 + 2 H2O. It participates in porphyrin-containing compound metabolism; protoporphyrin-IX biosynthesis; protoporphyrinogen-IX from coproporphyrinogen-III (O2 route): step 1/1. Involved in the heme biosynthesis. Catalyzes the aerobic oxidative decarboxylation of propionate groups of rings A and B of coproporphyrinogen-III to yield the vinyl groups in protoporphyrinogen-IX. The polypeptide is Oxygen-dependent coproporphyrinogen-III oxidase (Xylella fastidiosa (strain Temecula1 / ATCC 700964)).